The primary structure comprises 192 residues: Probable GTP-binding protein EngB (192 aa).

An EngB-type G domain is found at 22–192; the sequence is QIPEIVFAGR…LLAHLAQYIR (171 aa). GTP contacts are provided by residues 30–37, 57–61, 75–78, 142–145, and 172–174; these read GRSNVGKS, GKTRL, DLPG, TKDD, and YSS. Mg(2+) contacts are provided by S37 and T59.

The protein belongs to the TRAFAC class TrmE-Era-EngA-EngB-Septin-like GTPase superfamily. EngB GTPase family. Mg(2+) serves as cofactor.

In terms of biological role, necessary for normal cell division and for the maintenance of normal septation. The chain is Probable GTP-binding protein EngB from Chlorobium phaeobacteroides (strain DSM 266 / SMG 266 / 2430).